Consider the following 790-residue polypeptide: Penicillin-binding protein 1A (790 aa).

Over 1–6 (MYKSLF) the chain is Cytoplasmic. Residues 7-27 (FCLKIFAVLILVGCGITAYII) traverse the membrane as a helical; Signal-anchor for type II membrane protein segment. At 28 to 790 (YHYSRDLPDY…SKEDQSQEIY (763 aa)) the chain is on the periplasmic side. Positions 49 to 220 (TRIYSHDGKL…SELNPERNYA (172 aa)) are transglycosylase. The active-site Proton donor; for transglycosylase activity is the E87. The tract at residues 398–711 (DVIVVEPIKD…SNVVLPIFID (314 aa)) is transpeptidase. The Acyl-ester intermediate; for transpeptidase activity role is filled by S457.

In the N-terminal section; belongs to the glycosyltransferase 51 family. The protein in the C-terminal section; belongs to the transpeptidase family.

It localises to the cell inner membrane. It carries out the reaction [GlcNAc-(1-&gt;4)-Mur2Ac(oyl-L-Ala-gamma-D-Glu-L-Lys-D-Ala-D-Ala)](n)-di-trans,octa-cis-undecaprenyl diphosphate + beta-D-GlcNAc-(1-&gt;4)-Mur2Ac(oyl-L-Ala-gamma-D-Glu-L-Lys-D-Ala-D-Ala)-di-trans,octa-cis-undecaprenyl diphosphate = [GlcNAc-(1-&gt;4)-Mur2Ac(oyl-L-Ala-gamma-D-Glu-L-Lys-D-Ala-D-Ala)](n+1)-di-trans,octa-cis-undecaprenyl diphosphate + di-trans,octa-cis-undecaprenyl diphosphate + H(+). The catalysed reaction is Preferential cleavage: (Ac)2-L-Lys-D-Ala-|-D-Ala. Also transpeptidation of peptidyl-alanyl moieties that are N-acyl substituents of D-alanine.. The protein operates within cell wall biogenesis; peptidoglycan biosynthesis. Functionally, cell wall formation. Synthesis of cross-linked peptidoglycan from the lipid intermediates. The enzyme has a penicillin-insensitive transglycosylase N-terminal domain (formation of linear glycan strands) and a penicillin-sensitive transpeptidase C-terminal domain (cross-linking of the peptide subunits). In Rickettsia felis (strain ATCC VR-1525 / URRWXCal2) (Rickettsia azadi), this protein is Penicillin-binding protein 1A (mrcA).